We begin with the raw amino-acid sequence, 33 residues long: Brevinin-2GRb (33 aa).

Expressed by the skin glands.

Its subcellular location is the secreted. Antimicrobial peptide active against the Gram-positive bacterium S.aureus (MIC=25 uM) and against the Gram-negative bacteria E.coli (MIC=6 uM). Has no antifungal activity against C.albicans. Shows hemolytic activity against human erythrocytes only at high concentrations (LC(50)=180 uM). The chain is Brevinin-2GRb from Odorrana grahami (Yunnanfu frog).